The chain runs to 326 residues: uncharacterized protein (326 aa).

Substrate is bound at residue Ser-132. The active-site Proton acceptor is the Tyr-157.

It belongs to the NAD(P)-dependent epimerase/dehydratase family. dTDP-glucose dehydratase subfamily.

This is an uncharacterized protein from Methanocaldococcus jannaschii (strain ATCC 43067 / DSM 2661 / JAL-1 / JCM 10045 / NBRC 100440) (Methanococcus jannaschii).